A 220-amino-acid polypeptide reads, in one-letter code: Deoxyribose-phosphate aldolase (220 aa).

Aspartate 89 acts as the Proton donor/acceptor in catalysis. Lysine 151 functions as the Schiff-base intermediate with acetaldehyde in the catalytic mechanism. Lysine 180 (proton donor/acceptor) is an active-site residue.

Belongs to the DeoC/FbaB aldolase family. DeoC type 1 subfamily.

It is found in the cytoplasm. The enzyme catalyses 2-deoxy-D-ribose 5-phosphate = D-glyceraldehyde 3-phosphate + acetaldehyde. The protein operates within carbohydrate degradation; 2-deoxy-D-ribose 1-phosphate degradation; D-glyceraldehyde 3-phosphate and acetaldehyde from 2-deoxy-alpha-D-ribose 1-phosphate: step 2/2. In terms of biological role, catalyzes a reversible aldol reaction between acetaldehyde and D-glyceraldehyde 3-phosphate to generate 2-deoxy-D-ribose 5-phosphate. This chain is Deoxyribose-phosphate aldolase, found in Streptococcus sanguinis (strain SK36).